A 379-amino-acid polypeptide reads, in one-letter code: DnaJ homolog subfamily B member 14 (379 aa).

The Cytoplasmic portion of the chain corresponds to Met1–Asp244. The interval Thr56–Lys90 is disordered. The J domain occupies Asn108 to Gly172. A helical transmembrane segment spans residues Gly245–Leu265. The Lumenal segment spans residues Ser266–Gly379.

The protein belongs to the DnaJ family. DNAJB12/DNAJB14 subfamily. In terms of assembly, interacts (via J domain) with HSPA8/Hsc70. Forms a multiprotein complex, at least composed of DNAJB12, DNAJB14, HSPA8/Hsc70 and SGTA; interaction with DNAJB14 and HSPA8/Hsc70 is direct.

It is found in the endoplasmic reticulum membrane. Its subcellular location is the nucleus membrane. In terms of biological role, acts as a co-chaperone with HSPA8/Hsc70; required to promote protein folding and trafficking, prevent aggregation of client proteins, and promote unfolded proteins to endoplasmic reticulum-associated degradation (ERAD) pathway. Acts by determining HSPA8/Hsc70's ATPase and polypeptide-binding activities. Can also act independently of HSPA8/Hsc70: together with DNAJB12, acts as a chaperone that promotes maturation of potassium channels KCND2 and KCNH2 by stabilizing nascent channel subunits and assembling them into tetramers. While stabilization of nascent channel proteins is dependent on HSPA8/Hsc70, the process of oligomerization of channel subunits is independent of HSPA8/Hsc70. When overexpressed, forms membranous structures together with DNAJB12 and HSPA8/Hsc70 within the nucleus; the role of these structures, named DJANGOs, is still unclear. In Mus musculus (Mouse), this protein is DnaJ homolog subfamily B member 14.